The chain runs to 586 residues: uncharacterized protein (586 aa).

The tract at residues 1-115 (MRVLVAETGR…NTEKLAGRDD (115 aa)) is disordered. Basic and acidic residues predominate over residues 8-20 (TGREDNVSVHSRE). Residues 21–31 (VSVNGSDSGTG) show a composition bias toward polar residues. The span at 35–44 (YKLETDDEHP) shows a compositional bias: basic and acidic residues. The segment covering 76–107 (TGMNTEYNDDNSSLVNTPRDSTTYAETNSPNT) has biased composition (polar residues). WD repeat units follow at residues 184–223 (QFKESVWASEISKSGKYLATAGKDAIIRVWKVIETPERRE), 253–291 (GHNAEVLSISWSKNDFLLTSSADRTVRLWHPKSTKSLAV), 293–333 (RHNE…ILHW), 335–374 (ELEYVVSTICFYPDGESIVVGMFYGLCAIYETKNLQYVSS), 387–430 (CRVT…LVLK), and 432–474 (SDAH…LINA).

Its subcellular location is the cytoplasm. The protein localises to the nucleus. This is an uncharacterized protein from Schizosaccharomyces pombe (strain 972 / ATCC 24843) (Fission yeast).